The following is a 22-amino-acid chain: Caerin-3.3 (22 aa).

K22 carries the post-translational modification Lysine amide.

Expressed by the skin parotoid and/or rostral glands.

It localises to the secreted. Functionally, antibacterial peptide, that adopts an alpha helical conformation which can disrupt bacterial membranes. Each caerin displays a different antimicrobial specificity. The protein is Caerin-3.3 of Ranoidea caerulea (Green tree frog).